The primary structure comprises 495 residues: MVSEITHKSYPLHFVLFPFMAQGHMIPMVDIARLLAQRGVKITIVTTPHNAARFENVLSRAIESGLPISIVQVKLPSQEAGLPEGNETFDSLVSTKLLVPFFKAVNMLEEPVQKLFEEMSPQPSCIISDFCLPYTSKIAKKFNIPKILFHGMCCFCLLCMHVLRKNREILENLKSDKEHFVVPYFPDRVEFTRPQVPLATYVPGEWHEIKEDMVEADKTSYGVIVNTYQELEPAYANGYKEARSGKAWTIGPVSLCNKVGADKAERGNKADIDQDECLKWLDSKEEGSVLYVCLGSICSLPLSQLKELGLGLEESQRPFIWVVRGWEKNKELLEWFSESGFEERVKDRGLLIKGWSPQMLILAHHSVGGFLTHCGWNSTLEGITSGVPLLTWPLFGDQFCNQKLVVQVLKVGVSAGVEEVTNWGEEEKIGVLVDKEGVKKAVEELMGESDDAKEIRKRVKELGQLAHKAVEEGGSSHSNITSLLEDIMQLAQPNN.

The active-site Proton acceptor is the histidine 24. Histidine 24 is a binding site for an anthocyanidin. The active-site Charge relay is the aspartate 129. Residues glutamine 358, histidine 373, tryptophan 376, asparagine 377, serine 378, and glutamate 381 each coordinate UDP-alpha-D-glucose. Residue glycine 396 participates in an anthocyanidin binding. The UDP-alpha-D-glucose site is built by aspartate 397 and glutamine 398.

This sequence belongs to the UDP-glycosyltransferase family.

The catalysed reaction is oleanolate + UDP-alpha-D-glucose = oleanolate 3-O-beta-D-glucoside + UDP + H(+). Its function is as follows. Catalyzes the transfer of a glucose (Glc) moiety from UDP-Glc to the C-3 position of the oleanane sapogenins oleanolate and hederagenin, and to the C-28 carboxylic group of the lupane sapogenin betulinate. The monoglucosylated hederagenin 3-O-beta-D-glucoside is a feeding deterrent of the yellow-striped flea beetle (Phyllotreta nemorum). In Barbarea vulgaris (Yellow rocket), this protein is UDP-glycosyltransferase 73C10.